Here is a 226-residue protein sequence, read N- to C-terminus: Membrane protein (226 aa).

At 1–11 the chain is on the virion surface side; that stretch reads MSNGSIPVDEV. A helical membrane pass occupies residues 12 to 32; it reads IEHLRNWNFTWNIILTILLVV. The Intravirion segment spans residues 33-41; sequence LQYGHYKYS. Residues 42 to 62 traverse the membrane as a helical segment; the sequence is VFLYGVKMAILWILWPLVLAL. The Virion surface portion of the chain corresponds to 63-75; it reads SLFDAWASFQVNW. Residues 76–96 form a helical membrane-spanning segment; that stretch reads VFFAFSILMACITLMLWIMYF. Residues 97-226 are Intravirion-facing; sequence VNSIRLWRRT…TDSEKVLHLV (130 aa). An interaction with N protein region spans residues 200–216; sequence RSKHGDYSAVSNPSAVL.

This sequence belongs to the alphacoronaviruses M protein family. Homomultimer. Interacts with envelope E protein in the budding compartment of the host cell, which is located between endoplasmic reticulum and the Golgi complex. Forms a complex with HE and S proteins. Interacts with nucleocapsid N protein. This interaction probably participates in RNA packaging into the virus.

Its subcellular location is the virion membrane. The protein resides in the host Golgi apparatus membrane. Its function is as follows. Component of the viral envelope that plays a central role in virus morphogenesis and assembly via its interactions with other viral proteins. This chain is Membrane protein, found in Sus scrofa (Pig).